A 142-amino-acid polypeptide reads, in one-letter code: Large ribosomal subunit protein uL22c (142 aa).

The protein belongs to the universal ribosomal protein uL22 family. Part of the 50S ribosomal subunit.

The protein resides in the plastid. The protein localises to the chloroplast. Its function is as follows. This protein binds specifically to 23S rRNA. The globular domain of the protein is located near the polypeptide exit tunnel on the outside of the subunit, while an extended beta-hairpin is found that lines the wall of the exit tunnel in the center of the 70S ribosome. The protein is Large ribosomal subunit protein uL22c (rpl22) of Oenothera parviflora (Small-flowered evening primrose).